A 190-amino-acid chain; its full sequence is Ribosome hibernation promotion factor (190 aa).

A required for ribosome-binding region spans residues 101 to 190 (RDRGDQEVFV…KYGLIQTSEQ (90 aa)).

The protein belongs to the HPF/YfiA ribosome-associated protein family. Long HPF subfamily. As to quaternary structure, interacts with 100S ribosomes during exponential growth, as 100S ribosomes decrease (after 28 hours) also found associated with 30s and 50S subunits.

The protein resides in the cytoplasm. Its function is as follows. Required and sufficient for dimerization of active 70S ribosomes into 100S ribosomes. 110S ribosomes are probably translationally inactive and may serve as a reservoir of easily reactivated ribosomes when necessary in the cell. Also reduces the translation efficiency of a small number of genes. Unlike E.coli, 100S ribosomes are present during exponential growth and decrease during stationary phase. This strain produces 30% fewer 100S ribosomes than strain N315 and RN4200 under the same growth conditions. The polypeptide is Ribosome hibernation promotion factor (Staphylococcus aureus (strain USA300)).